The primary structure comprises 119 residues: Circadian clock oscillator protein KaiB (119 aa).

The protein belongs to the KaiB family. May undergo a major conformational rearrangment; in the free state forms homooligomers. When bound to KaiC switches to a monomeric thioredoxin-fold (KaiB(fs)). The active oscillator complex is probably KaiC(6):KaiB(6).

Functionally, component of the KaiBC clock protein complex, which constitutes the main circadian regulator in cyanobacteria; it may modify the ATPase activity of KaiC. In terms of biological role, may be a metamorphic protein which reversibly switches between an inactive tetrameric fold and a rare, thioredoxin-like monomeric fold (KaiB(fs)). KaiB(fs) binds phospho-KaiC, and perhaps clock output effectors. This chain is Circadian clock oscillator protein KaiB, found in Prochlorococcus marinus (strain MIT 9313).